A 156-amino-acid polypeptide reads, in one-letter code: ATP synthase subunit b (156 aa).

Residues 7–29 (LFGQTVAFILFVWFCMKFVWPPL) traverse the membrane as a helical segment.

Belongs to the ATPase B chain family. In terms of assembly, F-type ATPases have 2 components, F(1) - the catalytic core - and F(0) - the membrane proton channel. F(1) has five subunits: alpha(3), beta(3), gamma(1), delta(1), epsilon(1). F(0) has three main subunits: a(1), b(2) and c(10-14). The alpha and beta chains form an alternating ring which encloses part of the gamma chain. F(1) is attached to F(0) by a central stalk formed by the gamma and epsilon chains, while a peripheral stalk is formed by the delta and b chains.

Its subcellular location is the cell inner membrane. F(1)F(0) ATP synthase produces ATP from ADP in the presence of a proton or sodium gradient. F-type ATPases consist of two structural domains, F(1) containing the extramembraneous catalytic core and F(0) containing the membrane proton channel, linked together by a central stalk and a peripheral stalk. During catalysis, ATP synthesis in the catalytic domain of F(1) is coupled via a rotary mechanism of the central stalk subunits to proton translocation. Its function is as follows. Component of the F(0) channel, it forms part of the peripheral stalk, linking F(1) to F(0). The protein is ATP synthase subunit b of Shewanella frigidimarina (strain NCIMB 400).